A 621-amino-acid polypeptide reads, in one-letter code: Bifunctional protein GlmU (621 aa).

The segment at 1-229 is pyrophosphorylase; the sequence is MAERDLAVAI…AREIVGINDR (229 aa). Residues 11–14, K25, Q76, and 81–82 each bind UDP-N-acetyl-alpha-D-glucosamine; these read LAAG and GT. Position 106 (D106) interacts with Mg(2+). Residues G143, E158, N173, and N227 each contribute to the UDP-N-acetyl-alpha-D-glucosamine site. N227 provides a ligand contact to Mg(2+). The segment at 230–250 is linker; the sequence is RQLAQAYQILQDRLKEAWMEA. The interval 251-621 is N-acetyltransferase; that stretch reads GVTFVDPDSV…TGVGIPSCPP (371 aa). Residues R332 and K350 each coordinate UDP-N-acetyl-alpha-D-glucosamine. H362 serves as the catalytic Proton acceptor. Residues Y365 and N376 each coordinate UDP-N-acetyl-alpha-D-glucosamine. Acetyl-CoA is bound by residues A379, 385-386, A422, and R441; that span reads NY. The segment at 601-621 is disordered; sequence ATPPSPQRADGTGVGIPSCPP.

It in the N-terminal section; belongs to the N-acetylglucosamine-1-phosphate uridyltransferase family. The protein in the C-terminal section; belongs to the transferase hexapeptide repeat family. In terms of assembly, homotrimer. Mg(2+) serves as cofactor.

The protein localises to the cytoplasm. It carries out the reaction alpha-D-glucosamine 1-phosphate + acetyl-CoA = N-acetyl-alpha-D-glucosamine 1-phosphate + CoA + H(+). It catalyses the reaction N-acetyl-alpha-D-glucosamine 1-phosphate + UTP + H(+) = UDP-N-acetyl-alpha-D-glucosamine + diphosphate. It functions in the pathway nucleotide-sugar biosynthesis; UDP-N-acetyl-alpha-D-glucosamine biosynthesis; N-acetyl-alpha-D-glucosamine 1-phosphate from alpha-D-glucosamine 6-phosphate (route II): step 2/2. The protein operates within nucleotide-sugar biosynthesis; UDP-N-acetyl-alpha-D-glucosamine biosynthesis; UDP-N-acetyl-alpha-D-glucosamine from N-acetyl-alpha-D-glucosamine 1-phosphate: step 1/1. Its pathway is bacterial outer membrane biogenesis; LPS lipid A biosynthesis. Catalyzes the last two sequential reactions in the de novo biosynthetic pathway for UDP-N-acetylglucosamine (UDP-GlcNAc). The C-terminal domain catalyzes the transfer of acetyl group from acetyl coenzyme A to glucosamine-1-phosphate (GlcN-1-P) to produce N-acetylglucosamine-1-phosphate (GlcNAc-1-P), which is converted into UDP-GlcNAc by the transfer of uridine 5-monophosphate (from uridine 5-triphosphate), a reaction catalyzed by the N-terminal domain. The protein is Bifunctional protein GlmU of Synechococcus sp. (strain JA-3-3Ab) (Cyanobacteria bacterium Yellowstone A-Prime).